The sequence spans 162 residues: MSDKIGLFTGSFDPMTNGHLDIIERASRLFDKLYVGIFFNPHKQGFLPIENRKRGLEKALGHLENVEVVASHDELVVDVAKRLGATCLVRGLRNASDLQYEASFDYYNHQLSSDIETIYLHSRPEHLYISSSGVRELLKFGQDIACYVPESILEEIRNEKKD.

Residue Ser-11 participates in substrate binding. Residues 11 to 12 and His-19 each bind ATP; that span reads SF. Substrate is bound by residues Lys-43, Val-76, and Arg-90. Residues 91–93, Glu-101, and 126–132 contribute to the ATP site; these read GLR and HLYISSS.

It belongs to the bacterial CoaD family. In terms of assembly, homohexamer. Mg(2+) serves as cofactor.

Its subcellular location is the cytoplasm. The catalysed reaction is (R)-4'-phosphopantetheine + ATP + H(+) = 3'-dephospho-CoA + diphosphate. It participates in cofactor biosynthesis; coenzyme A biosynthesis; CoA from (R)-pantothenate: step 4/5. Is inhibited by a series of cycloalkyl pyrimidines, which also show suppression of bacterial growth. Reversibly transfers an adenylyl group from ATP to 4'-phosphopantetheine, yielding dephospho-CoA (dPCoA) and pyrophosphate. This Streptococcus pneumoniae (strain ATCC BAA-255 / R6) protein is Phosphopantetheine adenylyltransferase.